The sequence spans 386 residues: Cytochrome b (386 aa).

The next 4 membrane-spanning stretches (helical) occupy residues Leu-32–Met-52, Trp-76–Gly-98, Val-113–Cys-133, and Phe-179–Met-199. Residues His-82 and His-96 each coordinate heme b. Residues His-183 and His-197 each coordinate heme b. Residue His-202 participates in a ubiquinone binding. The next 4 helical transmembrane spans lie at Phe-225 to Phe-245, Leu-289 to Asp-309, Phe-321 to Glu-341, and Phe-348 to Pro-368.

It belongs to the cytochrome b family. Fungal cytochrome b-c1 complex contains 10 subunits; 3 respiratory subunits, 2 core proteins and 5 low-molecular weight proteins. Cytochrome b-c1 complex is a homodimer. The cofactor is heme b.

It is found in the mitochondrion inner membrane. In terms of biological role, component of the ubiquinol-cytochrome c reductase complex (complex III or cytochrome b-c1 complex) that is part of the mitochondrial respiratory chain. The b-c1 complex mediates electron transfer from ubiquinol to cytochrome c. Contributes to the generation of a proton gradient across the mitochondrial membrane that is then used for ATP synthesis. The sequence is that of Cytochrome b (COB) from Kluyveromyces lactis (strain ATCC 8585 / CBS 2359 / DSM 70799 / NBRC 1267 / NRRL Y-1140 / WM37) (Yeast).